We begin with the raw amino-acid sequence, 130 residues long: Small ribosomal subunit protein uS8 (130 aa).

It belongs to the universal ribosomal protein uS8 family. In terms of assembly, part of the 30S ribosomal subunit.

Its function is as follows. One of the primary rRNA binding proteins, it binds directly to 16S rRNA central domain where it helps coordinate assembly of the platform of the 30S subunit. The sequence is that of Small ribosomal subunit protein uS8 from Haloarcula marismortui (strain ATCC 43049 / DSM 3752 / JCM 8966 / VKM B-1809) (Halobacterium marismortui).